We begin with the raw amino-acid sequence, 545 residues long: Chaperonin GroEL 2 (545 aa).

Residues T29–P32, D86–T90, G413, D477–A479, and D493 contribute to the ATP site. Residues P526–F545 form a disordered region. Residues G534–F545 are compositionally biased toward basic residues.

It belongs to the chaperonin (HSP60) family. Forms a cylinder of 14 subunits composed of two heptameric rings stacked back-to-back. Interacts with the co-chaperonin GroES.

It is found in the cytoplasm. The enzyme catalyses ATP + H2O + a folded polypeptide = ADP + phosphate + an unfolded polypeptide.. Together with its co-chaperonin GroES, plays an essential role in assisting protein folding. The GroEL-GroES system forms a nano-cage that allows encapsulation of the non-native substrate proteins and provides a physical environment optimized to promote and accelerate protein folding. The chain is Chaperonin GroEL 2 from Salinispora arenicola (strain CNS-205).